A 239-amino-acid chain; its full sequence is Proteasome activator complex subunit 2 (239 aa).

Residue A2 is modified to N-acetylalanine. At S10 the chain carries Phosphoserine.

This sequence belongs to the PA28 family. Heterodimer of PSME1 and PSME2, which forms a hexameric ring.

Implicated in immunoproteasome assembly and required for efficient antigen processing. The PA28 activator complex enhances the generation of class I binding peptides by altering the cleavage pattern of the proteasome. The polypeptide is Proteasome activator complex subunit 2 (PSME2) (Homo sapiens (Human)).